The sequence spans 288 residues: uncharacterized protein (288 aa).

The span at 1-12 (MTEGRCAQHPDG) shows a compositional bias: basic and acidic residues. The segment at 1 to 20 (MTEGRCAQHPDGLDVQDVCD) is disordered.

The protein belongs to the class IV-like SAM-binding methyltransferase superfamily. RNA methyltransferase TrmH family.

This is an uncharacterized protein from Mycobacterium bovis (strain ATCC BAA-935 / AF2122/97).